A 303-amino-acid polypeptide reads, in one-letter code: Proteasome subunit beta (303 aa).

Positions 1 to 67 (MTWQFPDRLS…SGGTGQLPHG (67 aa)) are cleaved as a propeptide — removed in mature form; by autocatalysis. Threonine 68 functions as the Nucleophile in the catalytic mechanism.

The protein belongs to the peptidase T1B family. In terms of assembly, the 20S proteasome core is composed of 14 alpha and 14 beta subunits that assemble into four stacked heptameric rings, resulting in a barrel-shaped structure. The two inner rings, each composed of seven catalytic beta subunits, are sandwiched by two outer rings, each composed of seven alpha subunits. The catalytic chamber with the active sites is on the inside of the barrel. Has a gated structure, the ends of the cylinder being occluded by the N-termini of the alpha-subunits. Is capped by the proteasome-associated ATPase, ARC.

It is found in the cytoplasm. The enzyme catalyses Cleavage of peptide bonds with very broad specificity.. The protein operates within protein degradation; proteasomal Pup-dependent pathway. Its activity is regulated as follows. The formation of the proteasomal ATPase ARC-20S proteasome complex, likely via the docking of the C-termini of ARC into the intersubunit pockets in the alpha-rings, may trigger opening of the gate for substrate entry. Interconversion between the open-gate and close-gate conformations leads to a dynamic regulation of the 20S proteasome proteolysis activity. Its function is as follows. Component of the proteasome core, a large protease complex with broad specificity involved in protein degradation. The sequence is that of Proteasome subunit beta from Mycobacterium avium (strain 104).